We begin with the raw amino-acid sequence, 354 residues long: Probable L-ascorbate-6-phosphate lactonase UlaG (354 aa).

This sequence belongs to the UlaG family. A divalent metal cation is required as a cofactor.

The protein resides in the cytoplasm. The catalysed reaction is L-ascorbate 6-phosphate + H2O = 3-dehydro-L-gulonate 6-phosphate. Its pathway is cofactor degradation; L-ascorbate degradation; D-xylulose 5-phosphate from L-ascorbate: step 1/4. In terms of biological role, probably catalyzes the hydrolysis of L-ascorbate-6-P into 3-keto-L-gulonate-6-P. Is essential for L-ascorbate utilization under anaerobic conditions. The chain is Probable L-ascorbate-6-phosphate lactonase UlaG from Escherichia coli O127:H6 (strain E2348/69 / EPEC).